A 382-amino-acid chain; its full sequence is Sphingoid long-chain base transporter RSB1 (382 aa).

The Extracellular segment spans residues 1-34 (MSNATNNTLGSLLPQLEAAANSNSLYGGMVPNLR). N-linked (GlcNAc...) asparagine glycans are attached at residues Asn3 and Asn6. A helical membrane pass occupies residues 35–55 (FNITMIVIWGILLTIHVVQLL). At 56–57 (MR) the chain is on the cytoplasmic side. A helical membrane pass occupies residues 58-78 (QYWFSIAFICTGILEVLGYIG). Topologically, residues 79-90 (RTWSHSNVADMD) are extracellular. A helical membrane pass occupies residues 91–111 (AFLLNMICLTIAPVFTMGGIY). Topologically, residues 112-135 (YQLAKLIEVYGHRFSLLPSPMAYS) are cytoplasmic. A helical transmembrane segment spans residues 136–156 (FIFICSDIVSLVVQAVGGGLC). Over 157-171 (GVAVTDGTSTTTGNH) the chain is Extracellular. Residues 172–192 (VFIAGLAIQVASMAIFLMLWF) form a helical membrane-spanning segment. Over 193–241 (HFLFRIYISVRWEHINSRPISLSLLKISQTEVDYLYREKFHFLRLEPKR) the chain is Cytoplasmic. Residues 242–262 (WVFHYFNLAMTVAVLTIFTRC) form a helical membrane-spanning segment. The Extracellular portion of the chain corresponds to 263-281 (CYRLAELVVGWDGYLITHE). The chain crosses the membrane as a helical span at residues 282–302 (WYFIILDALMMAIATVTLTIF). Over 303 to 382 (HPGFAFKGRS…LFSSKKKAKL (80 aa)) the chain is Cytoplasmic.

This sequence belongs to the lipid-translocating exporter (LTE) (TC 9.A.26.1) family.

The protein resides in the cell membrane. Catalyzes the ATP-dependent translocation of sphingoid long-chain bases (LCBs) from the cytoplasmic site toward the extracytoplasmic side of the membrane (flip-flop). Involved in the establishment of the functional lipid asymmetry of the plasma membrane. Regulates intracellular levels of LCBs, sphingolipid precursors that are growth inhibitory at increased levels. The polypeptide is Sphingoid long-chain base transporter RSB1 (RSB1) (Saccharomyces cerevisiae (strain Lalvin EC1118 / Prise de mousse) (Baker's yeast)).